The chain runs to 1091 residues: Ninein homolog (1091 aa).

The segment at 1–361 is sufficient for binding to microtubules; it reads MEVSADPYEQ…AVEVDERHAS (361 aa). Disordered stretches follow at residues 100-216, 456-483, 525-602, and 616-639; these read YIES…TTSP, AQTS…KEEE, KAKK…EELT, and KAAK…SLEQ. Phosphoserine is present on residues S103, S107, S108, S113, and S141. T144 carries the phosphothreonine modification. A compositionally biased stretch (polar residues) spans 168–177; the sequence is VQRSSSQSDL. A sufficient for interaction with ens region spans residues 487-526; the sequence is LMEKLAALQMENAQLRDKTDELTIEIESLNVELIRSKTKA. Basic and acidic residues-rich tracts occupy residues 527–537 and 547–563; these read KKQEKQEKQED and RRGD…ESPR. S594 bears the Phosphoserine mark. Basic and acidic residues predominate over residues 616–634; sequence KAAKEGRSLTPESRSKELE. Residues S701 and S714 each carry the phosphoserine modification. Residues 799–919 are disordered; the sequence is AKSLADSKDE…TSCLSHEKCS (121 aa). Residues 822–845 are compositionally biased toward polar residues; that stretch reads SHKTASRNNLTTSETSIFSTTPFE. The span at 846–860 shows a compositional bias: low complexity; that stretch reads SSQSGPSPTNSGNSN. The span at 894-913 shows a compositional bias: polar residues; it reads ETSSTASGKSFESNSKTSCL.

As to quaternary structure, interacts with ens.

Its subcellular location is the cytoplasm. It localises to the cytoskeleton. The protein resides in the microtubule organizing center. The protein localises to the centrosome. It is found in the perinuclear region. Required for the positioning and anchorage of the microtubule minus-ends in various cells. In fat body cells, part of perinuclear non-centrosomal microtubule-organizing centers (ncMTOCs) which function to accommodate the organization of microtubule (MT) networks to control nuclear positioning and dynein motor-based retrograde endosomal trafficking. Within the ncMTOCs, Msp300 and shot anchors the ncMTOC at the nuclear surface and recruits the MT minus-end regulators Patronin and Nin for assembly, anchoring and/or stabilization of circumferential and radial MTs at the ncMTOC. This protein may also function with Patronin to recruit msps to the ncMTOC for the gamma-tubulin-independent elongation of radial MTs. In embryonic myotubes and larval myofibers, functions with ens to regulate myonuclear positioning and, as a consequence, is involved in muscle development. Likely functions by positively regulating ens. Essential for embryogenesis, likely by contributing to accurate chromosome segregation during early embryonic nuclear divisions. However, other reports found that it is not essential for embryogenesis or embryonic cellular divisions. The protein is Ninein homolog of Drosophila melanogaster (Fruit fly).